A 185-amino-acid chain; its full sequence is Ribosome hibernation promotion factor (185 aa).

The interval 1–125 (MIKFNIRGEN…PLDTTDEVAE (125 aa)) is probably still associates with ribosome. A required but not sufficient to restore ribosome dimerization, in vitro will replace E.coli RMF in ribosome dimerization region spans residues 126-185 (DHVDIVRTKHVALKPMDAEEAVLQMDMLGHDFYVFTDADSNGTHVVYRRTDGRYGLIETE).

It belongs to the HPF/YfiA ribosome-associated protein family. Long HPF subfamily. In terms of assembly, interacts with 100S ribosomes in stationary phase; alters the relative position of the 30S and 50S subunits.

Its subcellular location is the cytoplasm. In terms of biological role, required for dimerization of active 70S ribosomes into 100S ribosomes in stationary phase; 100S ribosomes are translationally inactive and sometimes present during exponential growth. Able to dimerize E.coli 70S ribosomes in vitro. The sequence is that of Ribosome hibernation promotion factor from Lactococcus lactis subsp. cremoris (strain MG1363).